Consider the following 515-residue polypeptide: Maturase K (515 aa).

It belongs to the intron maturase 2 family. MatK subfamily.

It is found in the plastid. It localises to the chloroplast. In terms of biological role, usually encoded in the trnK tRNA gene intron. Probably assists in splicing its own and other chloroplast group II introns. In Alpinia zerumbet (Shell ginger), this protein is Maturase K.